The chain runs to 490 residues: ATP synthase subunit beta, chloroplastic (490 aa).

169–176 lines the ATP pocket; the sequence is GGAGVGKT.

Belongs to the ATPase alpha/beta chains family. As to quaternary structure, F-type ATPases have 2 components, CF(1) - the catalytic core - and CF(0) - the membrane proton channel. CF(1) has five subunits: alpha(3), beta(3), gamma(1), delta(1), epsilon(1). CF(0) has four main subunits: a(1), b(1), b'(1) and c(9-12).

It localises to the plastid. Its subcellular location is the chloroplast thylakoid membrane. It catalyses the reaction ATP + H2O + 4 H(+)(in) = ADP + phosphate + 5 H(+)(out). Functionally, produces ATP from ADP in the presence of a proton gradient across the membrane. The catalytic sites are hosted primarily by the beta subunits. This is ATP synthase subunit beta, chloroplastic from Cyanidium caldarium (Red alga).